The following is a 461-amino-acid chain: Integrator complex subunit 12 (461 aa).

A disordered region spans residues 42–131 (GIDSSYRPTQ…PETRSSPITV (90 aa)). Lysine 68 is covalently cross-linked (Glycyl lysine isopeptide (Lys-Gly) (interchain with G-Cter in SUMO2)). Over residues 88-124 (TAEKIKKEAEKRPADKMKDVTEGIDVPKKPRLEKPET) the composition is skewed to basic and acidic residues. Phosphoserine is present on serine 127. The segment at 158-214 (GLACVVCRQMTVASGNQLVECQECHNLYHQDCHKPQVTDKEVNDPRLVWYCARCTRQ) adopts a PHD-type zinc-finger fold. Lysine 253 participates in a covalent cross-link: Glycyl lysine isopeptide (Lys-Gly) (interchain with G-Cter in SUMO2). The segment covering 302 to 328 (AGPSTAKLNSAAQNSSGKPAASSSNQK) has biased composition (polar residues). The tract at residues 302–443 (AGPSTAKLNS…PTSQESQLNA (142 aa)) is disordered. Composition is skewed to low complexity over residues 348–357 (GSGNSTSPSV) and 381–436 (VSKV…GPTS).

Belongs to the Integrator subunit 12 family. As to quaternary structure, component of the Integrator complex, composed of core subunits INTS1, INTS2, INTS3, INTS4, INTS5, INTS6, INTS7, INTS8, INTS9/RC74, INTS10, INTS11/CPSF3L, INTS12, INTS13, INTS14 and INTS15. The core complex associates with protein phosphatase 2A subunits PPP2CA and PPP2R1A, to form the Integrator-PP2A (INTAC) complex. Dephosphorylated at Ser-127 by the PNUTS-PP1 complex, promoting RNA polymerase II transcription pause-release.

The protein localises to the nucleus. In terms of biological role, component of the integrator complex, a multiprotein complex that terminates RNA polymerase II (Pol II) transcription in the promoter-proximal region of genes. The integrator complex provides a quality checkpoint during transcription elongation by driving premature transcription termination of transcripts that are unfavorably configured for transcriptional elongation: the complex terminates transcription by (1) catalyzing dephosphorylation of the C-terminal domain (CTD) of Pol II subunit POLR2A/RPB1 and SUPT5H/SPT5, (2) degrading the exiting nascent RNA transcript via endonuclease activity and (3) promoting the release of Pol II from bound DNA. The integrator complex is also involved in terminating the synthesis of non-coding Pol II transcripts, such as enhancer RNAs (eRNAs), small nuclear RNAs (snRNAs), telomerase RNAs and long non-coding RNAs (lncRNAs). Mediates recruitment of cytoplasmic dynein to the nuclear envelope, probably as component of the integrator complex. This Mus musculus (Mouse) protein is Integrator complex subunit 12 (Ints12).